The chain runs to 545 residues: MTALFNFWRIMYANISSIWLLVVSFFEWLFSATSISQQRGSGPRKGKVVMNKDCRSWEDWKVLATTIDKASGRWKWRFTPASDKYDYLLIDRCTVSLKRYRQRKSVYPMLMFLRSSLLRNFGNIGNSSLYTENYSGTKILIEEYVREVNNCLEFLYHTKRLSYDVKCDFFSAARISFGTTCLYFNGGTAFGLYHFGVAKTLWKRNLLPQILAGCASGALIASLLSVYRDEELNGLFDTFPSELWKICQQTSDYSLSKVVEYGNMLDISMIASFVRQRLGTITFQEAFERTGRIVNIVAPPSAVSGSPQVLNYFTAPNVLIWSAVCSSNSWAAIYRSSPLLAKLPDGSTEVCTPKNFIWPYAGLPNTGRSNPYARISEIFNVNHFVITQSRPSLFPTFYDELHHHRVSGYSLKMIRLVGLEMAYRFRQLDILGLLPPRLRRFFVDDYVPSAYITLTPTFSFSDIKHAFTKPSLSDIQYWILVGERATWQAIPLLQVRCKTEISLRHLSKNLTNSYVEPLSVNNLASPFVTNLEENQEKMLKIFKVK.

The 177-residue stretch at 182–358 (LYFNGGTAFG…EVCTPKNFIW (177 aa)) folds into the PNPLA domain. The GXSXG signature appears at 213 to 217 (GCASG).

Its subcellular location is the lipid droplet. The catalysed reaction is a triacylglycerol + H2O = a diacylglycerol + a fatty acid + H(+). Lipid particle-localized triacylglycerol (TAG) lipase. The lipid droplet/particle is a lipid storage compartment which serves as a depot of energy and building blocks for membrane lipid biosynthesis. Involved in the mobilization of the non-polar storage lipids triacylglycerols (TAGs) from lipid particles by hydrolysis of TAGs, releasing and supplying specific fatty acids to the appropriate metabolic pathways. The sequence is that of Triacylglycerol lipase ptl1 (ptl1) from Schizosaccharomyces pombe (strain 972 / ATCC 24843) (Fission yeast).